The chain runs to 172 residues: Adenine phosphoribosyltransferase (172 aa).

This sequence belongs to the purine/pyrimidine phosphoribosyltransferase family. As to quaternary structure, homodimer.

The protein resides in the cytoplasm. It catalyses the reaction AMP + diphosphate = 5-phospho-alpha-D-ribose 1-diphosphate + adenine. It participates in purine metabolism; AMP biosynthesis via salvage pathway; AMP from adenine: step 1/1. Catalyzes a salvage reaction resulting in the formation of AMP, that is energically less costly than de novo synthesis. This is Adenine phosphoribosyltransferase from Roseiflexus castenholzii (strain DSM 13941 / HLO8).